A 324-amino-acid polypeptide reads, in one-letter code: Glyoxylate/hydroxypyruvate reductase B (324 aa).

Active-site residues include R237 and E266. Catalysis depends on H285, which acts as the Proton donor.

This sequence belongs to the D-isomer specific 2-hydroxyacid dehydrogenase family. GhrB subfamily. In terms of assembly, homodimer.

It is found in the cytoplasm. It catalyses the reaction glycolate + NADP(+) = glyoxylate + NADPH + H(+). It carries out the reaction (R)-glycerate + NAD(+) = 3-hydroxypyruvate + NADH + H(+). The enzyme catalyses (R)-glycerate + NADP(+) = 3-hydroxypyruvate + NADPH + H(+). Functionally, catalyzes the NADPH-dependent reduction of glyoxylate and hydroxypyruvate into glycolate and glycerate, respectively. The sequence is that of Glyoxylate/hydroxypyruvate reductase B from Shigella dysenteriae serotype 1 (strain Sd197).